The chain runs to 170 residues: 2S seed storage protein 2 (170 aa).

The first 21 residues, 1-21 (MANKLFLVCATFALCFLLTNA), serve as a signal peptide directing secretion. 2 propeptides span residues 22–37 (SIYRTVVEFDEDDASN) and 73–88 (GPSLDDEFDLEDDIEN).

The protein belongs to the 2S seed storage albumins family. In terms of assembly, the mature protein consists of a small and a large chain linked by disulfide bonds.

Its function is as follows. This is a 2S seed storage protein. The protein is 2S seed storage protein 2 (AT2S2) of Arabidopsis thaliana (Mouse-ear cress).